Consider the following 194-residue polypeptide: Probable RNA polymerase sigma factor HI_1459 (194 aa).

A Polymerase core binding motif is present at residues 45 to 58; the sequence is DLVQEAFLSAFKNL. Positions 161 to 180 form a DNA-binding region, H-T-H motif; it reads SEEICQETHLTSSNLHTTLY.

This sequence belongs to the sigma-70 factor family. ECF subfamily.

In Haemophilus influenzae (strain ATCC 51907 / DSM 11121 / KW20 / Rd), this protein is Probable RNA polymerase sigma factor HI_1459.